A 270-amino-acid polypeptide reads, in one-letter code: 4-hydroxy-tetrahydrodipicolinate reductase (270 aa).

NAD(+) is bound by residues 8–13, aspartate 34, 102–104, and 128–131; these read GALGRM, GTT, and SQNY. Histidine 160 (proton donor/acceptor) is an active-site residue. Residue histidine 161 participates in (S)-2,3,4,5-tetrahydrodipicolinate binding. Lysine 164 (proton donor) is an active-site residue. Residue 170 to 171 participates in (S)-2,3,4,5-tetrahydrodipicolinate binding; sequence GT.

The protein belongs to the DapB family.

It localises to the cytoplasm. The catalysed reaction is (S)-2,3,4,5-tetrahydrodipicolinate + NAD(+) + H2O = (2S,4S)-4-hydroxy-2,3,4,5-tetrahydrodipicolinate + NADH + H(+). It catalyses the reaction (S)-2,3,4,5-tetrahydrodipicolinate + NADP(+) + H2O = (2S,4S)-4-hydroxy-2,3,4,5-tetrahydrodipicolinate + NADPH + H(+). It participates in amino-acid biosynthesis; L-lysine biosynthesis via DAP pathway; (S)-tetrahydrodipicolinate from L-aspartate: step 4/4. Its function is as follows. Catalyzes the conversion of 4-hydroxy-tetrahydrodipicolinate (HTPA) to tetrahydrodipicolinate. The sequence is that of 4-hydroxy-tetrahydrodipicolinate reductase from Methanococcus vannielii (strain ATCC 35089 / DSM 1224 / JCM 13029 / OCM 148 / SB).